We begin with the raw amino-acid sequence, 475 residues long: MASFGMNWNQKSPVFWDWENPAPFGPNTMENPKSIPHPEPRGVVVAAANHGSTNSSGGTFTSSSELANGSSKSSLSASFDSSSKLGNSLEFRFASVKGHGKNMCKDGEAGRVEDSGTSPAVAVSHGEPVIGLKLGKRTYFENVCGGQNVKSSSAASGVTCPSTVVKKMKVSQQSTQSSYCQVEGCKVDLSSAREYHRKHKVCEAHSKAPKVIVSGLERRFCQQCSRFHGLAEFDQKKKSCRRRLSDHNARRRKPQQEAISFGSSRLATMFYDARQQTDIYFGQSPFGQVRSNAISSCDNLGGFKFTEAKLPWMKPMKTIGLEDLNFSTLQMPGNVVSHTVHHHDFDGLIPFKGNTPKVLNQGVDPACAVVSSNSNGAPDLRRALSLLSSDSWGPADVQAGSQVHPGGVMPPLAVAAATVTAPTNPVSVMHALHPSTGGGGFWQDGDDPPPLDHASQAQAFMHPGNGSSSGYGHLH.

Residues 49–73 (NHGSTNSSGGTFTSSSELANGSSKS) are disordered. Over residues 51-73 (GSTNSSGGTFTSSSELANGSSKS) the composition is skewed to low complexity. The SBP-type zinc-finger motif lies at 177–254 (SSYCQVEGCK…SDHNARRRKP (78 aa)). Zn(2+)-binding residues include Cys180, Cys185, Cys202, His205, Cys221, Cys224, His228, and Cys240. The Bipartite nuclear localization signal motif lies at 237–253 (KKSCRRRLSDHNARRRK). A disordered region spans residues 437-475 (GGGGFWQDGDDPPPLDHASQAQAFMHPGNGSSSGYGHLH). Residues 465–475 (NGSSSGYGHLH) are compositionally biased toward polar residues.

As to expression, expressed in young panicles.

It localises to the nucleus. Its function is as follows. Trans-acting factor that binds specifically to the consensus nucleotide sequence 5'-TNCGTACAA-3'. May be involved in panicle development. The polypeptide is Squamosa promoter-binding-like protein 12 (SPL12) (Oryza sativa subsp. japonica (Rice)).